The primary structure comprises 406 residues: Cysteine desulfurase (406 aa).

Lys-226 carries the N6-(pyridoxal phosphate)lysine modification. Cys-364 functions as the Cysteine persulfide intermediate in the catalytic mechanism.

Belongs to the class-V pyridoxal-phosphate-dependent aminotransferase family. Csd subfamily. As to quaternary structure, homodimer. Interacts with SufE and the SufBCD complex composed of SufB, SufC and SufD. The interaction with SufE is required to mediate the direct transfer of the sulfur atom from the S-sulfanylcysteine. Pyridoxal 5'-phosphate is required as a cofactor.

The protein resides in the cytoplasm. It carries out the reaction (sulfur carrier)-H + L-cysteine = (sulfur carrier)-SH + L-alanine. It catalyses the reaction L-selenocysteine + AH2 = hydrogenselenide + L-alanine + A + H(+). Its pathway is cofactor biosynthesis; iron-sulfur cluster biosynthesis. Its function is as follows. Cysteine desulfurases mobilize the sulfur from L-cysteine to yield L-alanine, an essential step in sulfur metabolism for biosynthesis of a variety of sulfur-containing biomolecules. Component of the suf operon, which is activated and required under specific conditions such as oxidative stress and iron limitation. Acts as a potent selenocysteine lyase in vitro, that mobilizes selenium from L-selenocysteine. Selenocysteine lyase activity is however unsure in vivo. The protein is Cysteine desulfurase of Enterobacter sp. (strain 638).